Consider the following 928-residue polypeptide: Nuclear pore complex-interacting protein family member B12 (928 aa).

A helical membrane pass occupies residues 73–93; that stretch reads VVITLWIVYLWVSLLKTIFWS. Disordered regions lie at residues 242–452 and 663–928; these read RMGH…NIKT and ERLR…RRLS. Polar residues predominate over residues 252–263; sequence QQHSITDNSLSL. The span at 349-359 shows a compositional bias: pro residues; the sequence is PLPPSAPPSAP. 4 stretches are compositionally biased toward basic and acidic residues: residues 406-416, 698-708, 740-750, and 782-792; these read DNIKTPAERLR.

The protein belongs to the NPIP family.

The protein resides in the membrane. The protein is Nuclear pore complex-interacting protein family member B12 of Homo sapiens (Human).